A 149-amino-acid chain; its full sequence is Nucleoside diphosphate kinase (149 aa).

The ATP site is built by Lys9, Phe57, Arg85, Thr91, Arg102, and Asn112. Residue His115 is the Pros-phosphohistidine intermediate of the active site.

It belongs to the NDK family. In terms of assembly, homotetramer. It depends on Mg(2+) as a cofactor.

Its subcellular location is the cytoplasm. The catalysed reaction is a 2'-deoxyribonucleoside 5'-diphosphate + ATP = a 2'-deoxyribonucleoside 5'-triphosphate + ADP. The enzyme catalyses a ribonucleoside 5'-diphosphate + ATP = a ribonucleoside 5'-triphosphate + ADP. Major role in the synthesis of nucleoside triphosphates other than ATP. The ATP gamma phosphate is transferred to the NDP beta phosphate via a ping-pong mechanism, using a phosphorylated active-site intermediate. The protein is Nucleoside diphosphate kinase of Crocosphaera subtropica (strain ATCC 51142 / BH68) (Cyanothece sp. (strain ATCC 51142)).